Reading from the N-terminus, the 324-residue chain is Olfactory receptor 52I1 (324 aa).

Topologically, residues 1-29 (MLGPAYNHTMETPASFLLVGIPGLQSSHL) are extracellular. Asn7 carries N-linked (GlcNAc...) asparagine glycosylation. The chain crosses the membrane as a helical span at residues 30-50 (WLAISLSAMYITALLGNTLIV). At 51–58 (TAIWMDST) the chain is on the cytoplasmic side. A helical transmembrane segment spans residues 59-79 (RHEPMYCFLCVLAAVDIVMAS). The Extracellular segment spans residues 80–103 (SVVPKMVSIFCSGDSSISFSACFT). Cys101 and Cys193 are disulfide-bonded. Residues 104–124 (QMFFVHLATAVETGLLLTMAF) form a helical membrane-spanning segment. The Cytoplasmic segment spans residues 125–143 (DRYVAICKPLHYKRILTPQ). A helical transmembrane segment spans residues 144 to 164 (VMLGMSMAVTIRAVTFMTPLS). Topologically, residues 165–200 (WMMNHLPFCGSNVVVHSYCKHIALARLACADPVPSS) are extracellular. Residues 201 to 221 (LYSLIGSSLMVGSDVAFIAAS) form a helical membrane-spanning segment. At 222–241 (YILILRAVFDLSSKTAQLKA) the chain is on the cytoplasmic side. The helical transmembrane segment at 242–262 (LSTCGSHVGVMALYYLPGMAS) threads the bilayer. The Extracellular segment spans residues 263–278 (IYAAWLGQDIVPLHTQ). The helical transmembrane segment at 279-299 (VLLADLYVIIPATLNPIIYGM) threads the bilayer. Over 300–324 (RTKQLLEGIWSYLMHFLFDHSNLGS) the chain is Cytoplasmic.

Belongs to the G-protein coupled receptor 1 family.

Its subcellular location is the cell membrane. Functionally, odorant receptor. The sequence is that of Olfactory receptor 52I1 (OR52I1) from Homo sapiens (Human).